The following is a 675-amino-acid chain: Polyamine deacetylase HDAC10 (675 aa).

Residue Asp22 participates in substrate binding. A Substrate specificity motif is present at residues Pro23–Glu26. Asp94 is a substrate binding site. His137 functions as the Proton donor/acceptor in the catalytic mechanism. The Zn(2+) site is built by Asp174, His176, and Asp267. Tyr307 is a binding site for substrate. The tract at residues Leu362–Asp399 is disordered.

This sequence belongs to the histone deacetylase family. HD type 2 subfamily.

It is found in the cytoplasm. It localises to the nucleus. The enzyme catalyses N(8)-acetylspermidine + H2O = spermidine + acetate. The catalysed reaction is N-acetylputrescine + H2O = putrescine + acetate. It catalyses the reaction N-acetylcadaverine + H2O = cadaverine + acetate. Its function is as follows. Polyamine deacetylase (PDAC), which acts preferentially on N(8)-acetylspermidine, and also on acetylcadaverine and acetylputrescine. Exhibits attenuated catalytic activity toward N(1),N(8)-diacetylspermidine and very low activity, if any, toward N(1)-acetylspermidine. Has a very weak lysine deacetylase, if any. In Danio rerio (Zebrafish), this protein is Polyamine deacetylase HDAC10 (hdac10).